Reading from the N-terminus, the 256-residue chain is Thiazole synthase (256 aa).

Lys-95 functions as the Schiff-base intermediate with DXP in the catalytic mechanism. 1-deoxy-D-xylulose 5-phosphate contacts are provided by residues Gly-156, Ala-182–Gly-183, and Asn-204–Thr-205.

The protein belongs to the ThiG family. As to quaternary structure, homotetramer. Forms heterodimers with either ThiH or ThiS.

The protein resides in the cytoplasm. It carries out the reaction [ThiS sulfur-carrier protein]-C-terminal-Gly-aminoethanethioate + 2-iminoacetate + 1-deoxy-D-xylulose 5-phosphate = [ThiS sulfur-carrier protein]-C-terminal Gly-Gly + 2-[(2R,5Z)-2-carboxy-4-methylthiazol-5(2H)-ylidene]ethyl phosphate + 2 H2O + H(+). It participates in cofactor biosynthesis; thiamine diphosphate biosynthesis. In terms of biological role, catalyzes the rearrangement of 1-deoxy-D-xylulose 5-phosphate (DXP) to produce the thiazole phosphate moiety of thiamine. Sulfur is provided by the thiocarboxylate moiety of the carrier protein ThiS. In vitro, sulfur can be provided by H(2)S. The polypeptide is Thiazole synthase (Shigella flexneri).